Consider the following 348-residue polypeptide: D-alanine--D-alanine ligase (348 aa).

The ATP-grasp domain maps to 136 to 341 (KYLLQTVGIP…YSDLIEELIQ (206 aa)). An ATP-binding site is contributed by 169–224 (EGSLIYPVFVKPANMGSSVGISKVENREELQEALEEAFRYDARAIVEQGIEAREIE). Mg(2+)-binding residues include D295, E308, and N310.

The protein belongs to the D-alanine--D-alanine ligase family. Mg(2+) is required as a cofactor. Requires Mn(2+) as cofactor.

The protein localises to the cytoplasm. The enzyme catalyses 2 D-alanine + ATP = D-alanyl-D-alanine + ADP + phosphate + H(+). The protein operates within cell wall biogenesis; peptidoglycan biosynthesis. Functionally, cell wall formation. The sequence is that of D-alanine--D-alanine ligase (ddl) from Enterococcus faecalis (strain ATCC 700802 / V583).